Here is a 245-residue protein sequence, read N- to C-terminus: uncharacterized protein (245 aa).

4 helical membrane passes run 10-30 (FYTLFGLIWSLLVFFFLSPWY), 94-114 (TLAFLSTTFLIYFTIIFYVHI), 134-154 (VLIGSPLVSFFLSFITLFLII), and 196-216 (RGWIILMVDTILTFFATIYCW).

It is found in the membrane. This is an uncharacterized protein from Dictyostelium discoideum (Social amoeba).